Reading from the N-terminus, the 396-residue chain is Elongation factor Tu (396 aa).

In terms of domain architecture, tr-type G spans Lys10 to Glu206. The segment at Gly19–Thr26 is G1. Gly19 to Thr26 contributes to the GTP binding site. Thr26 is a binding site for Mg(2+). Residues Gly60 to Asn64 form a G2 region. The interval Asp81–Gly84 is G3. Residues Asp81–His85 and Asn136–Asp139 contribute to the GTP site. Residues Asn136 to Asp139 are G4. The tract at residues Ser174–Leu176 is G5.

This sequence belongs to the TRAFAC class translation factor GTPase superfamily. Classic translation factor GTPase family. EF-Tu/EF-1A subfamily. As to quaternary structure, monomer.

Its subcellular location is the cytoplasm. The catalysed reaction is GTP + H2O = GDP + phosphate + H(+). In terms of biological role, GTP hydrolase that promotes the GTP-dependent binding of aminoacyl-tRNA to the A-site of ribosomes during protein biosynthesis. This is Elongation factor Tu from Acinetobacter baumannii (strain ATCC 17978 / DSM 105126 / CIP 53.77 / LMG 1025 / NCDC KC755 / 5377).